The sequence spans 190 residues: Selenoprotein S (190 aa).

The span at 1–13 (MEAEDGARVRNED) shows a compositional bias: basic and acidic residues. A disordered region spans residues 1-20 (MEAEDGARVRNEDVPPQNQD). The chain crosses the membrane as a helical span at residues 30–50 (AFMSEYGWYLLFGCVGVYLLI). The segment covering 58-68 (SSTQTRSSSGS) has biased composition (low complexity). The interval 58-190 (SSTQTRSSSG…RRGPSAGGUG (133 aa)) is disordered. Residues 79-120 (RRQEALEASRRRMQEEQDARAAEFREKQRMLEEEKRRQKIEM) are compositionally biased toward basic and acidic residues. Residues 136-151 (VAQQNTEEAASSSSLR) show a composition bias toward polar residues. Position 189 (Sec189) is a non-standard amino acid, selenocysteine.

Belongs to the selenoprotein S family.

It localises to the endoplasmic reticulum membrane. The protein resides in the cytoplasm. Involved in the degradation process of misfolded endoplasmic reticulum (ER) luminal proteins. Participates in the transfer of misfolded proteins from the ER to the cytosol, where they are destroyed by the proteasome in a ubiquitin-dependent manner. This is Selenoprotein S (vimp) from Danio rerio (Zebrafish).